The chain runs to 397 residues: DnaJ homolog subfamily A member 1 (397 aa).

The 63-residue stretch at 6-68 (TYYDVLGVKP…KKRELYDKGG (63 aa)) folds into the J domain. The residue at position 66 (Lys-66) is an N6-acetyllysine. Ser-83 carries the post-translational modification Phosphoserine. Residues 121-205 (GATRKLALQK…CNGRKIVREK (85 aa)) form a CR-type zinc finger. Residues Cys-134, Cys-137, Cys-150, Cys-153, Cys-177, Cys-180, Cys-193, and Cys-196 each contribute to the Zn(2+) site. CXXCXGXG motif repeat units follow at residues 134 to 141 (CDKCEGRG), 150 to 157 (CPNCRGTG), 177 to 184 (CMECQGHG), and 193 to 200 (CKSCNGRK). Ser-335 carries the phosphoserine modification. The segment at 352-397 (VEETDEMDQVELVDFDPNQERRRHYNGEAYEDDEHHPRGGVQCQTS) is disordered. The span at 353 to 365 (EETDEMDQVELVD) shows a compositional bias: acidic residues. Tyr-381 is modified (phosphotyrosine). Cys-394 carries the post-translational modification Cysteine methyl ester. Cys-394 carries the S-farnesyl cysteine lipid modification. The propeptide at 395 to 397 (QTS) is removed in mature form.

Identified in a complex with HSPA1B and BAX. Interacts with RNF207.

The protein localises to the membrane. It localises to the cytoplasm. The protein resides in the microsome. It is found in the mitochondrion. Its subcellular location is the nucleus. The protein localises to the perinuclear region. Co-chaperone for HSPA8/Hsc70. Plays a role in protein transport into mitochondria via its role as co-chaperone. Functions as co-chaperone for HSPA1B and negatively regulates the translocation of BAX from the cytosol to mitochondria in response to cellular stress, thereby protecting cells against apoptosis. Stimulates ATP hydrolysis, but not the folding of unfolded proteins mediated by HSPA1A (in vitro). Promotes apoptosis in response to cellular stress mediated by exposure to anisomycin or UV. This is DnaJ homolog subfamily A member 1 (DNAJA1) from Chlorocebus aethiops (Green monkey).